Here is a 241-residue protein sequence, read N- to C-terminus: ATP phosphoribosyltransferase (241 aa).

It belongs to the ATP phosphoribosyltransferase family. Short subfamily. In terms of assembly, heteromultimer composed of HisG and HisZ subunits.

The protein resides in the cytoplasm. It catalyses the reaction 1-(5-phospho-beta-D-ribosyl)-ATP + diphosphate = 5-phospho-alpha-D-ribose 1-diphosphate + ATP. Its pathway is amino-acid biosynthesis; L-histidine biosynthesis; L-histidine from 5-phospho-alpha-D-ribose 1-diphosphate: step 1/9. Its function is as follows. Catalyzes the condensation of ATP and 5-phosphoribose 1-diphosphate to form N'-(5'-phosphoribosyl)-ATP (PR-ATP). Has a crucial role in the pathway because the rate of histidine biosynthesis seems to be controlled primarily by regulation of HisG enzymatic activity. The chain is ATP phosphoribosyltransferase from Gluconobacter oxydans (strain 621H) (Gluconobacter suboxydans).